Consider the following 343-residue polypeptide: N-acetyl-gamma-glutamyl-phosphate reductase (343 aa).

Residue C147 is part of the active site.

The protein belongs to the NAGSA dehydrogenase family. Type 1 subfamily.

It localises to the cytoplasm. It carries out the reaction N-acetyl-L-glutamate 5-semialdehyde + phosphate + NADP(+) = N-acetyl-L-glutamyl 5-phosphate + NADPH + H(+). It participates in amino-acid biosynthesis; L-arginine biosynthesis; N(2)-acetyl-L-ornithine from L-glutamate: step 3/4. Functionally, catalyzes the NADPH-dependent reduction of N-acetyl-5-glutamyl phosphate to yield N-acetyl-L-glutamate 5-semialdehyde. The sequence is that of N-acetyl-gamma-glutamyl-phosphate reductase from Listeria monocytogenes serotype 4b (strain CLIP80459).